The chain runs to 440 residues: UDP-N-acetylmuramoylalanine--D-glutamate ligase (440 aa).

128–134 lines the ATP pocket; that stretch reads GTNGKTT.

This sequence belongs to the MurCDEF family.

Its subcellular location is the cytoplasm. It carries out the reaction UDP-N-acetyl-alpha-D-muramoyl-L-alanine + D-glutamate + ATP = UDP-N-acetyl-alpha-D-muramoyl-L-alanyl-D-glutamate + ADP + phosphate + H(+). Its pathway is cell wall biogenesis; peptidoglycan biosynthesis. Its function is as follows. Cell wall formation. Catalyzes the addition of glutamate to the nucleotide precursor UDP-N-acetylmuramoyl-L-alanine (UMA). The protein is UDP-N-acetylmuramoylalanine--D-glutamate ligase of Lawsonia intracellularis (strain PHE/MN1-00).